The chain runs to 525 residues: Vesicular inhibitory amino acid transporter (525 aa).

Residues 1–132 (MATLLRSKLT…WNVTNAIQGM (132 aa)) lie on the Cytoplasmic side of the membrane. Residues 133 to 153 (FVLGLPYAILHGGYLGLFLII) form a helical membrane-spanning segment. The Lumenal, vesicle segment spans residues 154–204 (FAAVVCCYTGKILIACLYEENEDGEVVRVRDSYVAIANACCAPRFPTLGGR). Y186 carries the 3'-nitrotyrosine modification. A helical membrane pass occupies residues 205 to 225 (VVNVAQIIELVMTCILYVVVS). The Cytoplasmic portion of the chain corresponds to 226 to 265 (GNLMYNSFPGLPVSQKSWSIIATAVLLPCAFLKNLKAVSK). The chain crosses the membrane as a helical span at residues 266–286 (FSLLCTLAHFVINILVIAYCL). The Lumenal, vesicle portion of the chain corresponds to 287-305 (SRARDWAWEKVKFYIDVKK). A helical membrane pass occupies residues 306 to 326 (FPISIGIIVFSYTSQIFLPSL). Residues 327–341 (EGNMQQPSEFHCMMN) are Cytoplasmic-facing. The chain crosses the membrane as a helical span at residues 342–362 (WTHIAACVLKGLFALVAYLTW). The Lumenal, vesicle segment spans residues 363 to 383 (ADETKEVITDNLPGSIRAVVN). Residues 384 to 404 (IFLVAKALLSYPLPFFAAVEV) form a helical membrane-spanning segment. The Cytoplasmic segment spans residues 405–438 (LEKSLFQEGSRAFFPACYGGDGRLKSWGLTLRCA). Residues 439 to 459 (LVVFTLLMAIYVPHFALLMGL) form a helical membrane-spanning segment. Topologically, residues 460–461 (TG) are lumenal, vesicle. Residues 462 to 482 (SLTGAGLCFLLPSLFHLRLLW) form a helical membrane-spanning segment. Residues 483–489 (RKLLWHQ) lie on the Cytoplasmic side of the membrane. Residues 490–510 (VFFDVAIFVIGGICSVSGFVH) traverse the membrane as a helical segment. Residues 511-525 (SLEGLIEAYRTNAED) lie on the Lumenal, vesicle side of the membrane.

Belongs to the amino acid/polyamine transporter 2 family. In terms of tissue distribution, brain. Expressed at high levels within the neocortex, hippocampus, cerebellum, striatum, septal nuclei and the reticular nucleus of the thalamus. Also expressed in islets where it is more abundant in the peripheral/mantle region. Highly expressed in the nerve endings of GABA neurons in the brain and spinal cord but also in glycinergic nerve endings. Expressed in glycine-, GABA- or GABA- and glycine-containing boutons.

The protein localises to the cytoplasmic vesicle. Its subcellular location is the secretory vesicle. The protein resides in the synaptic vesicle membrane. It localises to the presynapse. The enzyme catalyses beta-alanine(out) + n H(+)(in) = beta-alanine(in) + n H(+)(out). It carries out the reaction 4-aminobutanoate(out) + n H(+)(in) = 4-aminobutanoate(in) + n H(+)(out). It catalyses the reaction glycine(out) + n H(+)(in) = glycine(in) + n H(+)(out). Functionally, antiporter that exchanges vesicular protons for cytosolic 4-aminobutanoate or to a lesser extend glycine, thus allowing their secretion from nerve terminals. The transport is equally dependent on the chemical and electrical components of the proton gradient. May also transport beta-alanine. Acidification of GABAergic synaptic vesicles is a prerequisite for 4-aminobutanoate uptake. The sequence is that of Vesicular inhibitory amino acid transporter from Rattus norvegicus (Rat).